We begin with the raw amino-acid sequence, 494 residues long: Ubiquitin carboxyl-terminal hydrolase 27 (494 aa).

Residues 30 to 50 (LSFAGLLGVAGFVFAQQHGLF) traverse the membrane as a helical segment. The 421-residue stretch at 74–494 (PGLQNLGNNC…EASLLFYERL (421 aa)) folds into the USP domain. Cys83 serves as the catalytic Nucleophile. His440 acts as the Proton acceptor in catalysis.

Belongs to the peptidase C19 family.

It localises to the membrane. It catalyses the reaction Thiol-dependent hydrolysis of ester, thioester, amide, peptide and isopeptide bonds formed by the C-terminal Gly of ubiquitin (a 76-residue protein attached to proteins as an intracellular targeting signal).. In terms of biological role, recognizes and hydrolyzes the peptide bond at the C-terminal Gly of ubiquitin. Involved in the processing of poly-ubiquitin precursors as well as that of ubiquitinated proteins. The sequence is that of Ubiquitin carboxyl-terminal hydrolase 27 (UBP27) from Arabidopsis thaliana (Mouse-ear cress).